Reading from the N-terminus, the 285-residue chain is Orotidine 5'-phosphate decarboxylase (285 aa).

Substrate-binding positions include D40, 62–64 (KTH), 93–102 (DRKFVDIGST), Y235, and R253. Residue K95 is the Proton donor of the active site.

It belongs to the OMP decarboxylase family.

It carries out the reaction orotidine 5'-phosphate + H(+) = UMP + CO2. The protein operates within pyrimidine metabolism; UMP biosynthesis via de novo pathway; UMP from orotate: step 2/2. The chain is Orotidine 5'-phosphate decarboxylase (URA3) from Paracoccidioides brasiliensis.